The sequence spans 82 residues: M-zodatoxin-Lt3b (82 aa).

The first 22 residues, 1–22 (MKTYAVLLALVVAFVCIAESTG), serve as a signal peptide directing secretion. A propeptide spanning residues 23 to 61 (YPVEDLEDDELTELEAEALLEDLLEDLELEDLDYNEEAR) is cleaved from the precursor. A Processing quadruplet motif motif is present at residues 58-61 (EEAR). Alanine 81 bears the Alanine amide mark.

Post-translationally, cleavage of the propeptide depends on the processing quadruplet motif (XXXR, with at least one of X being E). In terms of tissue distribution, expressed by the venom gland.

It is found in the secreted. Its function is as follows. It has antimicrobial activity against Gram-positive bacteria (A.globiformis VKM Ac-1112 (MIC=0.7 uM), and B.subtilis VKM B-501 (MIC=2.9 uM)), Gram-negative bacteria (E.coli DH5-alpha (MIC=23 uM), E.coli MH1 (MIC=28 uM), and P.aeruginosa PAO1 (MIC&gt;45 uM)), and yeasts (P.pastoris GS115 (MIC=23 uM), and S.cerevisiae Y190 (MIC=23 uM)). Does not have hemolytic against rabbit erythrocytes. Causes paralysis, but is not lethal when injected into insect (M.domestica) larvae. This chain is M-zodatoxin-Lt3b, found in Lachesana tarabaevi (Spider).